A 701-amino-acid polypeptide reads, in one-letter code: Polyribonucleotide nucleotidyltransferase (701 aa).

Positions 487 and 493 each coordinate Mg(2+). Residues 554–613 (PTMLQMKIDSDKIRDVIGKGGATIRAICEETKASIDIEDDGSVKIYGETKEAAEAAKQRV) enclose the KH domain. The S1 motif domain occupies 623-691 (GKIYVGKVER…NRGRIKLSIK (69 aa)).

This sequence belongs to the polyribonucleotide nucleotidyltransferase family. In terms of assembly, component of the RNA degradosome, which is a multiprotein complex involved in RNA processing and mRNA degradation. It depends on Mg(2+) as a cofactor.

The protein resides in the cytoplasm. The enzyme catalyses RNA(n+1) + phosphate = RNA(n) + a ribonucleoside 5'-diphosphate. Its function is as follows. Involved in mRNA degradation. Catalyzes the phosphorolysis of single-stranded polyribonucleotides processively in the 3'- to 5'-direction. This Pseudomonas paraeruginosa (strain DSM 24068 / PA7) (Pseudomonas aeruginosa (strain PA7)) protein is Polyribonucleotide nucleotidyltransferase.